The following is a 159-amino-acid chain: Ribosomal RNA large subunit methyltransferase H (159 aa).

S-adenosyl-L-methionine-binding positions include L76, G108, and 127 to 132 (FGQLTL).

This sequence belongs to the RNA methyltransferase RlmH family. Homodimer.

The protein localises to the cytoplasm. The enzyme catalyses pseudouridine(1915) in 23S rRNA + S-adenosyl-L-methionine = N(3)-methylpseudouridine(1915) in 23S rRNA + S-adenosyl-L-homocysteine + H(+). In terms of biological role, specifically methylates the pseudouridine at position 1915 (m3Psi1915) in 23S rRNA. This is Ribosomal RNA large subunit methyltransferase H from Streptococcus gordonii (strain Challis / ATCC 35105 / BCRC 15272 / CH1 / DL1 / V288).